The following is a 117-amino-acid chain: Eukaryotic translation initiation factor 4E-binding protein (117 aa).

Phosphothreonine occurs at positions 37 and 46. The short motif at 54–60 (YERAFMK) is the YXXXXLphi motif; atypical element. Serine 65 carries the phosphoserine modification. Threonine 70 is subject to Phosphothreonine.

It belongs to the eIF4E-binding protein family. Hypophosphorylated Thor/4E-BP competes with eIF4G1 to interact with eIF4E1; insulin stimulated Akt1 or Tor phosphorylation of Thor/4E-BP causes dissociation of the complex allowing eIF4G1 to bind and consequent initiation of translation. Phosphorylation at Thr-37, Thr-46, Ser-65 and Thr-70, corresponding to the hyperphosphorylated form, impairs its ability to prevent the interaction between eIF4G1 and eIF4E1, without affecting its interaction with free eIF4E1. Phosphorylated in rtesponse to insulin. Phosphorylation at Thr-46 is regulated by Tor and constitutes the major phosphorylation event that regulates activity. In terms of tissue distribution, widely expressed.

Repressor of translation initiation that regulates eIF4E1 activity by preventing its assembly into the eIF4F complex. Hypophosphorylated form competes with eIF4G1 and strongly binds to eIF4E1, leading to repress translation. In contrast, hyperphosphorylated form dissociates from eIF4E1, allowing interaction between eIF4G1 and eIF4E1, leading to initiation of translation. Acts as a regulator of various biological processes, such as innate immunity, cell growth or synaptic transmission. Acts downstream of phosphoinositide-3-kinase (PI3K) to regulate cell growth. Extends lifespan upon dietary restriction by regulating the mitochondrial translation. Acts as a regulator of lifespan in response to cold by regulating the mitochondrial translation. Acts as a negative regulator of presynaptic release of neurotransmitter in motor neurons: Thor expression is induced in response to insulin signaling, leading to prevent of translation of complexin (cpx), a protein known to regulate the exocytosis of synaptic vesicles. Acts as a negative regulator of synaptic strength at the neuromuscular junction: Thor expression in response to acute fasting prevents translation, thereby suppressing retrograde synaptic enhancement. The sequence is that of Eukaryotic translation initiation factor 4E-binding protein from Drosophila melanogaster (Fruit fly).